The following is a 156-amino-acid chain: Putative thymidylate kinase (156 aa).

7–14 serves as a coordination point for ATP; that stretch reads GLDGTGKT.

This sequence belongs to the thymidylate kinase family.

The enzyme catalyses dTMP + ATP = dTDP + ADP. Its pathway is pyrimidine metabolism; dTTP biosynthesis. Catalyzes the conversion of dTMP to dTDP. This is Putative thymidylate kinase from Acidianus convivator (ABV).